Here is a 606-residue protein sequence, read N- to C-terminus: Sulfite reductase [NADPH] flavoprotein alpha-component (606 aa).

In terms of domain architecture, Flavodoxin-like spans 64 to 202; it reads VTLISASQTG…QAQQWRQQVV (139 aa). FMN contacts are provided by residues 70–75, 117–120, and 153–162; these read SQTGNA, STQG, and LGDTSYEHFC. Low complexity predominate over residues 212 to 234; the sequence is QSTAPTQSTTPAAAAITSGGTTT. Residues 212–235 are disordered; sequence QSTAPTQSTTPAAAAITSGGTTTV. Positions 241–455 constitute an FAD-binding FR-type domain; that stretch reads TAPLTAQLSV…IEHNDNFRLP (215 aa). Residues T329, K363, 393-396, 411-413, Y417, and 426-429 contribute to the FAD site; these read RLYS, TVG, and GGAS. Residues 526 to 527, 532 to 536, and D568 contribute to the NADP(+) site; these read SR and KIYVQ. Y606 is an FAD binding site.

It belongs to the NADPH-dependent sulphite reductase flavoprotein subunit CysJ family. The protein in the N-terminal section; belongs to the flavodoxin family. In the C-terminal section; belongs to the flavoprotein pyridine nucleotide cytochrome reductase family. In terms of assembly, alpha(8)-beta(8). The alpha component is a flavoprotein, the beta component is a hemoprotein. FAD is required as a cofactor. The cofactor is FMN.

The catalysed reaction is hydrogen sulfide + 3 NADP(+) + 3 H2O = sulfite + 3 NADPH + 4 H(+). The protein operates within sulfur metabolism; hydrogen sulfide biosynthesis; hydrogen sulfide from sulfite (NADPH route): step 1/1. In terms of biological role, component of the sulfite reductase complex that catalyzes the 6-electron reduction of sulfite to sulfide. This is one of several activities required for the biosynthesis of L-cysteine from sulfate. The flavoprotein component catalyzes the electron flow from NADPH -&gt; FAD -&gt; FMN to the hemoprotein component. In Yersinia pestis bv. Antiqua (strain Antiqua), this protein is Sulfite reductase [NADPH] flavoprotein alpha-component.